We begin with the raw amino-acid sequence, 238 residues long: Laccase-S (238 aa).

2 Plastocyanin-like domains span residues Asn4–Ala87 and His100–Tyr238. Asn8 carries N-linked (GlcNAc...) asparagine glycosylation. Residues His21, His23, His66, and His68 each coordinate Cu cation. Cys74 and Cys162 are joined by a disulfide. The N-linked (GlcNAc...) asparagine glycan is linked to Asn165.

This sequence belongs to the multicopper oxidase family. As to quaternary structure, monomer. Cu cation serves as cofactor.

The protein localises to the secreted. It catalyses the reaction 4 hydroquinone + O2 = 4 benzosemiquinone + 2 H2O. Its activity is regulated as follows. Activity is strongly promoted by toluene. Activity is promoted by magnesium, potassium, cadmium, zinc, nickel, sodium, lead and manganese ions. Completely inhibited by IAA (cysteine protease inhibitor), PMSF (serine protease inhibitor), DEP (histidine protease inhibitor) and NAI (tyrosine protease inhibitor). Inhibited by ethanol, acetone, SDS, and EDTA. Activity is strongly inhibited by mercury ions. Also inhibited by lithium, aluminum, calcium, barium and iron ions. Functionally, lignin degradation and detoxification of lignin-derived products. Has activity towards 2,2'-azino-bis(3-ethylbenzothiazoline-6-sulfonic acid) (ABTS). This is Laccase-S from Trametes hirsuta (White-rot fungus).